The primary structure comprises 273 residues: Type III pantothenate kinase (273 aa).

An ATP-binding site is contributed by 5–12 (DVGNSHVV). 112–115 (GTDL) is a substrate binding site. Asp114 serves as the catalytic Proton acceptor. Asp134 is a K(+) binding site. Thr137 is a binding site for ATP. Thr189 provides a ligand contact to substrate.

This sequence belongs to the type III pantothenate kinase family. As to quaternary structure, homodimer. Requires NH4(+) as cofactor. K(+) is required as a cofactor.

The protein resides in the cytoplasm. It carries out the reaction (R)-pantothenate + ATP = (R)-4'-phosphopantothenate + ADP + H(+). It participates in cofactor biosynthesis; coenzyme A biosynthesis; CoA from (R)-pantothenate: step 1/5. Catalyzes the phosphorylation of pantothenate (Pan), the first step in CoA biosynthesis. The sequence is that of Type III pantothenate kinase from Treponema pallidum subsp. pallidum (strain SS14).